A 388-amino-acid chain; its full sequence is Basigin (388 aa).

Residues 1–22 (MAAALLLALAFTFLSGQGACAA) form the signal peptide. Topologically, residues 23–326 (AGFLKAPMSQ…ISLRVRSRLA (304 aa)) are extracellular. Positions 37-120 (GGSVVLHCEA…SSDPDRNHLT (84 aa)) constitute an Ig-like domain. 3 cysteine pairs are disulfide-bonded: C44/C108, C157/C203, and C242/C304. Residues 138–219 (EPGTIVTSVQ…VGRGNINVEG (82 aa)) enclose the Ig-like C2-type domain. Residues N160, N269, and N305 are each glycosylated (N-linked (GlcNAc...) asparagine). An Ig-like V-type domain is found at 221-320 (PRIKVGKKSE…GSARETISLR (100 aa)). A helical membrane pass occupies residues 327–347 (ALWPFLGIVAEVLVLVTIIFI). Topologically, residues 348 to 388 (YEKRRKPDQTLDEDDPGAAPLKGSGSHLNDKDKNVRQRNAT) are cytoplasmic. The disordered stretch occupies residues 355–388 (DQTLDEDDPGAAPLKGSGSHLNDKDKNVRQRNAT). Residue T357 is modified to Phosphothreonine. The residue at position 371 (S371) is a Phosphoserine.

Homooligomer. Interacts with NXNL1, SLC2A1 and SLC16A1/GLUT1. Interacts with XKR8; promoting its localization at the cell membrane. In terms of assembly, homooligomer. Interacts with SLC16A1; interaction mediates SLC16A1 targeting to the plasma membrane. Interacts with SLC16A3; interaction mediates SLC16A3 targeting to the plasma membrane. Interacts with VEGFA, KDR/VEGFR2, PPIA/CYPA, SLC16A12, SLC16A11, ATP1B2, MAG, L1CAM and AJAP1. Interacts with PPIL2; regulates BSG transport to the cell membrane. As to quaternary structure, interacts with SLC16A6; this interaction mediates targeting to the plasma membrane. Expressed in the skeletal muscle, liver, small intestine, kidney, testis, brain, heart and spleen. Also present in various immature cells and endothelia.

The protein resides in the cell membrane. It is found in the photoreceptor inner segment. It localises to the cell projection. Its subcellular location is the cilium. The protein localises to the photoreceptor outer segment. The protein resides in the endoplasmic reticulum membrane. It is found in the basolateral cell membrane. Functionally, essential for normal retinal maturation and development. Acts as a retinal cell surface receptor for NXNL1 and plays an important role in NXNL1-mediated survival of retinal cone photoreceptors. In association with glucose transporter SLC16A1/GLUT1 and NXNL1, promotes retinal cone survival by enhancing aerobic glycolysis and accelerating the entry of glucose into photoreceptors. Signaling receptor for cyclophilins, essential for PPIA/CYPA and PPIB/CYPB-dependent signaling related to chemotaxis and adhesion of immune cells. Plays an important role in targeting the monocarboxylate transporters SLC16A1/GLUT1 and SLC16A3 to the plasma membrane. Acts as a coreceptor for vascular endothelial growth factor receptor 2 (KDR/VEGFR2) in endothelial cells enhancing its VEGFA-mediated activation and downstream signaling. Promotes angiogenesis through EPAS1/HIF2A-mediated up-regulation of VEGFA and KDR/VEGFR2 in endothelial cells. Plays an important role in spermatogenesis; mediates interactions between germ cells and Sertoli cell and is essential for the development/differentiation of germ cells to round spermatids. The protein is Basigin (Bsg) of Rattus norvegicus (Rat).